The following is a 335-amino-acid chain: UPF0353 protein Mvan_2751 (335 aa).

Helical transmembrane passes span 18–38 (WFFL…IVQM) and 67–87 (LPAV…AGPT). Positions 98–294 (VVMLVIDVSQ…EQLKQVFTNL (197 aa)) constitute a VWFA domain. Residues 309-329 (VGWLRIGSLVLALAALGALLI) form a helical membrane-spanning segment.

Belongs to the UPF0353 family.

Its subcellular location is the cell membrane. The protein is UPF0353 protein Mvan_2751 of Mycolicibacterium vanbaalenii (strain DSM 7251 / JCM 13017 / BCRC 16820 / KCTC 9966 / NRRL B-24157 / PYR-1) (Mycobacterium vanbaalenii).